Here is a 351-residue protein sequence, read N- to C-terminus: MSKFWSPAVRELTPYVPGEQPRERLIKLNTNENPYPPAPGVEQVLREFPVDHLRLYPDPSATALREALAETYDVATEQVFVGNGSDEVLALAFQAFFRQSRPLLMPAISYSFYPVYCKLYDVAYRSVALDDQWRVPLTAFDTDNGGIVFANPNAPTGHGHSRDAIAALLERNTESVVLVDEAYVDFGGESAVPLVERFPNLLVTGTFSKSRSLAGLRLGYAIGSRELIEGLERVKDSFNSFPIDRITIDAGIAALHDRAYFEACRERVITTRERTRQRLESLGFEVMPSQSNFLFVRHETYEGRAIFGELRERGILVRHFDKEALSDFLRISIGTEDEMDSLIEALEAVCR.

Residue K209 is modified to N6-(pyridoxal phosphate)lysine.

The protein belongs to the class-II pyridoxal-phosphate-dependent aminotransferase family. Histidinol-phosphate aminotransferase subfamily. As to quaternary structure, homodimer. The cofactor is pyridoxal 5'-phosphate.

It catalyses the reaction L-histidinol phosphate + 2-oxoglutarate = 3-(imidazol-4-yl)-2-oxopropyl phosphate + L-glutamate. It functions in the pathway amino-acid biosynthesis; L-histidine biosynthesis; L-histidine from 5-phospho-alpha-D-ribose 1-diphosphate: step 7/9. This chain is Histidinol-phosphate aminotransferase, found in Chromohalobacter salexigens (strain ATCC BAA-138 / DSM 3043 / CIP 106854 / NCIMB 13768 / 1H11).